The sequence spans 243 residues: Glycerophosphodiester phosphodiesterase (243 aa).

Positions 3 to 239 (TLVIAHRGDS…DDPETLINLV (237 aa)) constitute a GP-PDE domain. Residue His8 is the Proton acceptor of the active site. Positions 35 and 37 each coordinate Ca(2+). Catalysis depends on His50, which acts as the Proton donor. A Ca(2+)-binding site is contributed by Glu110.

Belongs to the glycerophosphoryl diester phosphodiesterase family. Homodimer. It depends on Mg(2+) as a cofactor. Requires Ca(2+) as cofactor.

The catalysed reaction is a sn-glycero-3-phosphodiester + H2O = an alcohol + sn-glycerol 3-phosphate + H(+). It catalyses the reaction sn-glycerol 3-phosphocholine + H2O = sn-glycerol 3-phosphate + choline + H(+). Inhibited by EDTA. Glycerophosphodiester phosphodiesterase hydrolyzes glycerophosphodiesters into glycerol-3-phosphate (G3P) and the corresponding alcohol. Can use glycerophosphocholine. The protein is Glycerophosphodiester phosphodiesterase of Caldanaerobacter subterraneus subsp. tengcongensis (strain DSM 15242 / JCM 11007 / NBRC 100824 / MB4) (Thermoanaerobacter tengcongensis).